Here is a 427-residue protein sequence, read N- to C-terminus: UPF0597 protein CD630_32320 (427 aa).

It belongs to the UPF0597 family.

The chain is UPF0597 protein CD630_32320 from Clostridioides difficile (strain 630) (Peptoclostridium difficile).